A 100-amino-acid chain; its full sequence is MAKKSVIQRNINRLKLINKYSAQREAIKNEIKRTSKVEKKISLYSNISRLPRDSSKVRLRSRCWVTGRGRSVYKNFGLSRHMFRFMASNGLLPGVVKSSW.

This sequence belongs to the universal ribosomal protein uS14 family. As to quaternary structure, part of the 30S ribosomal subunit.

It is found in the plastid. It localises to the chloroplast. In terms of biological role, binds 16S rRNA, required for the assembly of 30S particles. This chain is Small ribosomal subunit protein uS14c, found in Cyanidium caldarium (Red alga).